The chain runs to 1180 residues: Chitin synthase 6 (1180 aa).

Transmembrane regions (helical) follow at residues 108 to 128 (FTICAIIFWLCAIILFYIIAF) and 374 to 394 (LLLAFSVLLVTTVLAKFIAAL). Asn-737 is a glycosylation site (N-linked (GlcNAc...) asparagine). Helical transmembrane passes span 762-782 (FIVFIDLLGTVILPATAVYLV), 795-815 (IPYISIAMIAAVYGLQAILFL), and 822-842 (YIGWLVIYILAYPVFSFFLPI). A DEK-C domain is found at 1118-1175 (DPTDEEIKSAVQTYLANQPSLMNVTKRSVREALVAAFPNAELSYKKSMINKAIDDTLS).

This sequence belongs to the chitin synthase family. Class V subfamily.

It is found in the cell membrane. Its subcellular location is the cytoplasmic vesicle membrane. The catalysed reaction is [(1-&gt;4)-N-acetyl-beta-D-glucosaminyl](n) + UDP-N-acetyl-alpha-D-glucosamine = [(1-&gt;4)-N-acetyl-beta-D-glucosaminyl](n+1) + UDP + H(+). Its function is as follows. Polymerizes chitin, a structural polymer of the cell wall and septum, by transferring the sugar moiety of UDP-GlcNAc to the non-reducing end of the growing chitin polymer. Plays a crucial role during infection and allows the fungus to overcome the resistance of the plant that checks growth of the pathogen and eventually eliminates it. The polypeptide is Chitin synthase 6 (Mycosarcoma maydis (Corn smut fungus)).